The primary structure comprises 496 residues: Probable cytosol aminopeptidase (496 aa).

2 residues coordinate Mn(2+): K251 and D256. K263 is an active-site residue. Mn(2+) is bound by residues D274, D333, and E335. The active site involves R337.

The protein belongs to the peptidase M17 family. The cofactor is Mn(2+).

Its subcellular location is the cytoplasm. It catalyses the reaction Release of an N-terminal amino acid, Xaa-|-Yaa-, in which Xaa is preferably Leu, but may be other amino acids including Pro although not Arg or Lys, and Yaa may be Pro. Amino acid amides and methyl esters are also readily hydrolyzed, but rates on arylamides are exceedingly low.. The catalysed reaction is Release of an N-terminal amino acid, preferentially leucine, but not glutamic or aspartic acids.. Functionally, presumably involved in the processing and regular turnover of intracellular proteins. Catalyzes the removal of unsubstituted N-terminal amino acids from various peptides. The chain is Probable cytosol aminopeptidase from Acidovorax ebreus (strain TPSY) (Diaphorobacter sp. (strain TPSY)).